The sequence spans 129 residues: UPF0102 protein Mnod_0024 (129 aa).

The protein belongs to the UPF0102 family.

This Methylobacterium nodulans (strain LMG 21967 / CNCM I-2342 / ORS 2060) protein is UPF0102 protein Mnod_0024.